The primary structure comprises 637 residues: Coiled-coil domain-containing protein 22 homolog (637 aa).

Coiled coils occupy residues 322–489 (ETEI…YKQA) and 608–637 (SDRVVQDLKNIKSENQSLIKQIKTLIETKN).

The protein belongs to the CCDC22 family.

This is Coiled-coil domain-containing protein 22 homolog from Dictyostelium discoideum (Social amoeba).